A 590-amino-acid chain; its full sequence is DNA mismatch repair protein MutL (590 aa).

Positions 335-351 are enriched in polar residues; the sequence is PLSSASPKLPESTTATA. The disordered stretch occupies residues 335-354; sequence PLSSASPKLPESTTATAQPH.

This sequence belongs to the DNA mismatch repair MutL/HexB family.

In terms of biological role, this protein is involved in the repair of mismatches in DNA. It is required for dam-dependent methyl-directed DNA mismatch repair. May act as a 'molecular matchmaker', a protein that promotes the formation of a stable complex between two or more DNA-binding proteins in an ATP-dependent manner without itself being part of a final effector complex. The chain is DNA mismatch repair protein MutL from Dichelobacter nodosus (strain VCS1703A).